The chain runs to 400 residues: Subtilisin-like protease 1 (400 aa).

An N-terminal signal peptide occupies residues 1–20 (MKFSQSLIALAACFLPLIAA). Positions 21 to 119 (APVEAQHAKI…IEMDGKVQAN (99 aa)) are excised as a propeptide. Residues 42-117 (SYIVVFNKGV…AWIEMDGKVQ (76 aa)) enclose the Inhibitor I9 domain. N-linked (GlcNAc...) asparagine glycosylation occurs at Asn-82. Residues 128–400 (TWGLGRISHK…NLIAYNGNGA (273 aa)) enclose the Peptidase S8 domain. Active-site charge relay system residues include Asp-160, His-192, and Ser-345.

Belongs to the peptidase S8 family.

It localises to the secreted. Functionally, major secreted subtilisin-like serine endopeptidase. Mediates the degradation of collagen, the major structural protein in the mammalian host. Degrades the nonhelical regions of collagen that function in the cross-linking of the helical components. May function as virulence factor involved in epidermal wing necrosis observed in white nose syndrome (WNS) in bats. This is Subtilisin-like protease 1 from Pseudogymnoascus destructans (strain ATCC MYA-4855 / 20631-21) (Bat white-nose syndrome fungus).